Consider the following 71-residue polypeptide: Heat-stable enterotoxin II (71 aa).

Residues 1-23 (MKKNIAFLLASMFVFSIATNAYA) form the signal peptide. 2 disulfide bridges follow: Cys-33/Cys-71 and Cys-44/Cys-59.

It localises to the secreted. Its function is as follows. Toxin which activates the particulate form of guanylate cyclase and increases cyclic GMP levels within the host intestinal epithelial cells. The sequence is that of Heat-stable enterotoxin II (stiI) from Escherichia coli.